The sequence spans 327 residues: Complex I intermediate-associated protein 30, mitochondrial (327 aa).

A mitochondrion-targeting transit peptide spans 1 to 24 (MALVHKLLRGTYFLRKFSKPTSAL). Residues 42–63 (PVASPGKASSQRKTEGDLQGDH) form a disordered region. The span at 53–63 (RKTEGDLQGDH) shows a compositional bias: basic and acidic residues. Phosphoserine is present on Ser318.

The protein belongs to the CIA30 family. In terms of assembly, part of the mitochondrial complex I assembly/MCIA complex that comprises at least the core subunits TMEM126B, NDUFAF1, ECSIT and ACAD9 and complement subunits such as COA1 and TMEM186. Interacts with ECSIT. Interacts with ACAD9. At early stages of complex I assembly, it is found in intermediate subcomplexes that contain different subunits including NDUFB6, NDUFA6, NDUFA9, NDUFS3, NDUFS7, ND1, ND2 and ND3. Interacts with TMEM70 and TMEM242. As to expression, ubiquitous.

The protein localises to the mitochondrion. Its subcellular location is the mitochondrion matrix. As part of the MCIA complex, involved in the assembly of the mitochondrial complex I. The chain is Complex I intermediate-associated protein 30, mitochondrial from Homo sapiens (Human).